Here is a 114-residue protein sequence, read N- to C-terminus: Iron-sulfur cluster insertion protein ErpA (114 aa).

Residues C42, C106, and C108 each coordinate iron-sulfur cluster.

It belongs to the HesB/IscA family. Homodimer. Iron-sulfur cluster serves as cofactor.

In terms of biological role, required for insertion of 4Fe-4S clusters for at least IspG. The chain is Iron-sulfur cluster insertion protein ErpA from Yersinia enterocolitica serotype O:8 / biotype 1B (strain NCTC 13174 / 8081).